The sequence spans 527 residues: Phosphoenolpyruvate carboxykinase (ATP) (527 aa).

Substrate-binding residues include arginine 54, tyrosine 190, and lysine 196. ATP is bound by residues lysine 196, histidine 215, and 231 to 239; that span reads GLSGTGKTT. Mn(2+) is bound by residues lysine 196 and histidine 215. Residue aspartate 252 coordinates Mn(2+). Residues glutamate 280, arginine 317, 436–437, and threonine 442 each bind ATP; that span reads RI. A substrate-binding site is contributed by arginine 317.

The protein belongs to the phosphoenolpyruvate carboxykinase (ATP) family. Mn(2+) is required as a cofactor.

The protein resides in the cytoplasm. The catalysed reaction is oxaloacetate + ATP = phosphoenolpyruvate + ADP + CO2. The protein operates within carbohydrate biosynthesis; gluconeogenesis. Its function is as follows. Involved in the gluconeogenesis. Catalyzes the conversion of oxaloacetate (OAA) to phosphoenolpyruvate (PEP) through direct phosphoryl transfer between the nucleoside triphosphate and OAA. The sequence is that of Phosphoenolpyruvate carboxykinase (ATP) from Oceanobacillus iheyensis (strain DSM 14371 / CIP 107618 / JCM 11309 / KCTC 3954 / HTE831).